Here is a 101-residue protein sequence, read N- to C-terminus: UPF0213 protein VC_A0739 (101 aa).

Residues 9-85 (SPWFVYLVRC…KALSKSQKEA (77 aa)) form the GIY-YIG domain.

The protein belongs to the UPF0213 family.

The chain is UPF0213 protein VC_A0739 from Vibrio cholerae serotype O1 (strain ATCC 39315 / El Tor Inaba N16961).